The sequence spans 335 residues: Tetraacyldisaccharide 4'-kinase (335 aa).

58-65 (TVGGSGKT) contributes to the ATP binding site.

This sequence belongs to the LpxK family.

The enzyme catalyses a lipid A disaccharide + ATP = a lipid IVA + ADP + H(+). It participates in glycolipid biosynthesis; lipid IV(A) biosynthesis; lipid IV(A) from (3R)-3-hydroxytetradecanoyl-[acyl-carrier-protein] and UDP-N-acetyl-alpha-D-glucosamine: step 6/6. Its function is as follows. Transfers the gamma-phosphate of ATP to the 4'-position of a tetraacyldisaccharide 1-phosphate intermediate (termed DS-1-P) to form tetraacyldisaccharide 1,4'-bis-phosphate (lipid IVA). This is Tetraacyldisaccharide 4'-kinase from Shewanella oneidensis (strain ATCC 700550 / JCM 31522 / CIP 106686 / LMG 19005 / NCIMB 14063 / MR-1).